Reading from the N-terminus, the 481-residue chain is Matrilin-3 (481 aa).

Positions 1–27 are cleaved as a signal peptide; the sequence is MLLSAPLRHLPGLLLLLWPLLLLPSLA. The 176-residue stretch at 78 to 253 folds into the VWFA domain; sequence DLVFIIDSSR…GVIEKLSARF (176 aa). R193 is subject to Omega-N-methylarginine. 4 consecutive EGF-like domains span residues 259-300, 301-342, 343-384, and 385-426; these read ALDQ…KTCS, AIDK…RTCA, ALDK…KTCS, and VRNK…KTCS. Disulfide bonds link C263/C274, C270/C284, C286/C299, C305/C316, C312/C326, C328/C341, C347/C358, C354/C368, C370/C383, C389/C400, C396/C410, and C412/C425. The N-linked (GlcNAc...) asparagine glycan is linked to N321. Residue S436 is modified to Phosphoserine; by FAM20C. Residues 451–475 adopt a coiled-coil conformation; sequence EKVSSHLQKLNTKLDNILKKLKVTE.

Can form homooligomers (monomers, dimers, trimers and tetramers) and heterooligomers with matrilin-1. Interacts with COMP. Component of a complex containing at least CRELD2, MANF, MATN3 and PDIA4. In terms of tissue distribution, strongly expressed in growing skeletal tissue such as epiphyseal growth plate or in bone undergoing growth and remodeling. In the bone, actively synthesized in osteoblasts and osteocytes. Expressed in cartilage of sternum, femur, vertebrae, trachea, articular and epiphyseal cartilage, cartilage of developing bones and bones.

It is found in the secreted. Its function is as follows. Major component of the extracellular matrix of cartilage and may play a role in the formation of extracellular filamentous networks. The protein is Matrilin-3 (Matn3) of Mus musculus (Mouse).